The sequence spans 536 residues: Alpha-1,3-mannosyl-glycoprotein 4-beta-N-acetylglucosaminyltransferase A (536 aa).

The Cytoplasmic segment spans residues 1-6 (MRLRNG). Residues 7-27 (TVATALVFITTFLSLSWYTAW) form a helical; Signal-anchor for type II membrane protein membrane-spanning segment. A coiled-coil region spans residues 28 to 54 (QNGKEKLMAYQREFHALKERLRIAEHR). Residues 28-536 (QNGKEKLMAY…EIHIKRNPAD (509 aa)) lie on the Lumenal side of the membrane. N-linked (GlcNAc...) asparagine glycosylation is found at N77 and N458.

This sequence belongs to the glycosyltransferase 54 family. Requires a divalent metal cation as cofactor. In terms of processing, N-glycosylated.

The protein resides in the golgi apparatus membrane. The protein localises to the secreted. It carries out the reaction N(4)-{beta-D-GlcNAc-(1-&gt;2)-alpha-D-Man-(1-&gt;3)-[beta-D-GlcNAc-(1-&gt;2)-alpha-D-Man-(1-&gt;6)]-beta-D-Man-(1-&gt;4)-beta-D-GlcNAc-(1-&gt;4)-beta-D-GlcNAc}-L-asparaginyl-[protein] + UDP-N-acetyl-alpha-D-glucosamine = N(4)-{beta-D-GlcNAc-(1-&gt;2)-[beta-D-GlcNAc-(1-&gt;4)]-alpha-D-Man-(1-&gt;3)-[beta-D-GlcNAc-(1-&gt;2)-alpha-D-Man-(1-&gt;6)]-beta-D-Man-(1-&gt;4)-beta-D-GlcNAc-(1-&gt;4)-beta-D-GlcNAc}-L-asparaginyl-[protein] + UDP + H(+). It catalyses the reaction an N(4)-{beta-D-GlcNAc-(1-&gt;2)-alpha-D-Man-(1-&gt;3)-[alpha-D-Man-(1-&gt;6)]-beta-D-Man-(1-&gt;4)-beta-D-GlcNAc-(1-&gt;4)-beta-D-GlcNAc}-L-asparaginyl-[protein] + UDP-N-acetyl-alpha-D-glucosamine = an N(4)-{beta-D-GlcNAc-(1-&gt;2)-[beta-D-GlcNAc-(1-&gt;4)]-alpha-D-Man-(1-&gt;3)-[alpha-D-Man-(1-&gt;6)]-beta-D-Man-(1-&gt;4)-beta-D-GlcNAc-(1-&gt;4)-beta-D-GlcNAc}-L-asparaginyl-[protein] + UDP + H(+). The catalysed reaction is an N(4)-{beta-D-GlcNAc-(1-&gt;2)-alpha-D-Man-(1-&gt;3)-[beta-D-GlcNAc-(1-&gt;2)-[beta-D-GlcNAc-(1-&gt;6)]-alpha-D-Man-(1-&gt;6)]-beta-D-Man-(1-&gt;4)-beta-D-GlcNAc-(1-&gt;4)-beta-D-GlcNAc}-L-asparaginyl-[protein] + UDP-N-acetyl-alpha-D-glucosamine = an N(4)-{beta-D-GlcNAc-(1-&gt;2)-[beta-D-GlcNAc-(1-&gt;4)]-alpha-D-Man-(1-&gt;3)-[beta-D-GlcNAc-(1-&gt;2)-[beta-D-GlcNAc-(1-&gt;6)]-alpha-D-Man-(1-&gt;6)]-beta-D-Man-(1-&gt;4)-beta-D-GlcNAc-(1-&gt;4)-beta-D-GlcNAc}-L-asparaginyl-[protein] + UDP + H(+). The enzyme catalyses an N(4)-{beta-D-GlcNAc-(1-&gt;2)-alpha-D-Man-(1-&gt;3)-[beta-D-GlcNAc-(1-&gt;2)-alpha-D-Man-(1-&gt;6)]-beta-D-Man-(1-&gt;4)-beta-D-GlcNAc-(1-&gt;4)-[alpha-L-Fuc-(1-&gt;6)]-beta-D-GlcNAc}-L-asparaginyl-[protein] + UDP-N-acetyl-alpha-D-glucosamine = N(4)-{beta-D-GlcNAc-(1-&gt;2)-[beta-D-GlcNAc-(1-&gt;4)]-alpha-D-Man-(1-&gt;3)-[beta-D-GlcNAc-(1-&gt;2)-alpha-D-Man-(1-&gt;6)]-beta-D-Man-(1-&gt;4)-beta-D-GlcNAc-(1-&gt;4)-[alpha-L-Fuc-(1-&gt;6)]-beta-D-GlcNAc}-asparaginyl-[protein] + UDP + H(+). It carries out the reaction an N(4)-{beta-D-GlcNAc-(1-&gt;2)-alpha-D-Man-(1-&gt;3)-[beta-D-Gal-(1-&gt;4)-beta-D-GlcNAc-(1-&gt;2)-alpha-D-Man-(1-&gt;6)]-beta-D-Man-(1-&gt;4)-beta-D-GlcNAc-(1-&gt;4)-beta-D-GlcNAc}-L-asparaginyl-[protein] + UDP-N-acetyl-alpha-D-glucosamine = an N(4)-{beta-D-GlcNAc-(1-&gt;2)-[beta-D-GlcNAc-(1-&gt;4)]-alpha-D-Man-(1-&gt;3)-[beta-D-Gal-(1-&gt;4)-beta-D-GlcNAc-(1-&gt;2)-alpha-D-Man-(1-&gt;6)]-beta-D-Man-(1-&gt;4)-beta-D-GlcNAc-(1-&gt;4)-beta-D-GlcNAc}-L-asparaginyl-[protein] + UDP + H(+). It catalyses the reaction N(4)-{beta-D-GlcNAc-(1-&gt;2)-alpha-D-Man-(1-&gt;3)-[alpha-D-Man-(1-&gt;3)-{alpha-D-Man-(1-&gt;6)}-alpha-D-Man-(1-&gt;6)]-beta-D-Man-(1-&gt;4)-beta-D-GlcNAc-(1-&gt;4)-beta-D-GlcNAc}-asparaginyl-[protein] + UDP-N-acetyl-alpha-D-glucosamine = N(4)-{beta-D-GlcNAc-(1-&gt;2)-[beta-D-GlcNAc-(1-&gt;4)]-alpha-D-Man-(1-&gt;3)-[alpha-D-Man-(1-&gt;3)-{alpha-D-Man-(1-&gt;6)}-alpha-D-Man-(1-&gt;6)]-beta-D-Man-(1-&gt;4)-beta-D-GlcNAc-(1-&gt;4)-beta-D-GlcNAc}-asparaginyl-[protein] + UDP + H(+). The catalysed reaction is N(4)-{beta-D-GlcNAc-(1-&gt;2)-alpha-D-Man-(1-&gt;3)-beta-D-Man-(1-&gt;4)-beta-D-GlcNAc-(1-&gt;4)-beta-D-GlcNAc}-asparaginyl-[protein] + UDP-N-acetyl-alpha-D-glucosamine = N(4)-{beta-D-GlcNAc-(1-&gt;2)-[beta-D-GlcNAc-(1-&gt;4)]-alpha-D-Man-(1-&gt;3)-beta-D-Man-(1-&gt;4)-beta-D-GlcNAc-(1-&gt;4)-beta-D-GlcNAc}-asparaginyl-[protein] + UDP + H(+). It participates in protein modification; protein glycosylation. Its activity is regulated as follows. Inhibited by UDP. In terms of biological role, glycosyltransferase that catalyze the transfer of GlcNAc from UDP-GlcNAc to the GlcNAcbeta1-2Manalpha1-3 arm of the core structure of N-linked glycans through a beta1-4 linkage and participates in the production of tri- and tetra-antennary N-linked sugar chains. Involved in glucose transport by mediating SLC2A2/GLUT2 glycosylation, thereby controlling cell-surface expression of SLC2A2 in pancreatic beta cells. The protein is Alpha-1,3-mannosyl-glycoprotein 4-beta-N-acetylglucosaminyltransferase A of Xenopus tropicalis (Western clawed frog).